The chain runs to 136 residues: Histone H3.3 (136 aa).

The tract at residues 1–45 (MARTKQTARKSTGGKAPRKQLASKAARKAAPATGGVKKPHRYRPP) is disordered. K5 carries the post-translational modification N6,N6,N6-trimethyllysine; alternate. N6,N6-dimethyllysine; alternate is present on K5. 2 positions are modified to N6-methyllysine; alternate: K5 and K10. K10 carries the N6-acetyllysine; alternate modification. Residue S11 is modified to Phosphoserine. K15 carries the post-translational modification N6,N6-dimethyllysine; alternate. An N6-acetyllysine; alternate mark is found at K15, K19, K24, K28, and K37. 4 positions are modified to N6-methyllysine; alternate: K19, K24, K28, and K37. Residues 19 to 32 (KQLASKAARKAAPA) are compositionally biased toward low complexity. N6,N6,N6-trimethyllysine; alternate occurs at positions 28 and 37. 2 positions are modified to N6,N6-dimethyllysine; alternate: K28 and K37. N6-acetyllysine occurs at positions 57 and 65. Position 80 is an N6,N6,N6-trimethyllysine; alternate (K80). Residue K80 is modified to N6,N6-dimethyllysine; alternate. K80 carries the post-translational modification N6-methyllysine; alternate. K123 carries the post-translational modification N6-acetyllysine.

It belongs to the histone H3 family. As to quaternary structure, the nucleosome is a histone octamer containing two molecules each of H2A, H2B, H3 and H4 assembled in one H3-H4 heterotetramer and two H2A-H2B heterodimers. The octamer wraps approximately 147 bp of DNA. In terms of processing, phosphorylated by ark1 to form H3S10ph in a cell cycle-dependent manner during mitosis and meiosis. H3S10ph is also formed by ssp2, promotes subsequent H3K14ac formation by gcn5, and is required for transcriptional activation through TBP recruitment to the promoters. Dephosphorylation is performed by sds21. Mono-, di- and trimethylated by the COMPASS complex to form H3K4me1/2/3. H3K4me activates gene expression by regulating transcription elongation and plays a role in telomere length maintenance. H3K4me enrichment correlates with transcription levels, and occurs in a 5' to 3' gradient with H3K4me3 enrichment at the 5'-end of genes, shifting to H3K4me2 and then H3K4me1. Methylated by clr4 to form H3K9me1. H3K9me1 represents a specific tag for epigenetic transcriptional repression by recruiting swi6/HP1 to methylated histones. Targeting to histone probably involves clr3 and rik1. Essential for silencing of centromeres and directional switching of the mating type. Methylated by set2 to form H3K36me. H3K36me represses gene expression. Methylated by dot1 to form H3K79me. H3K79me is required for association of SIR proteins with telomeric regions and for telomeric silencing. The COMPASS-mediated formation of H3K4me2/3 and the dot1-mediated formation of H3K79me require H2BK123ub1. Post-translationally, acetylation of histone H3 leads to transcriptional activation. H3K14ac formation by gcn5 is promoted by H3S10ph. H3K14ac can also be formed by esa1. H3K56ac formation occurs predominantly in newly synthesized H3 molecules during G1, S and G2/M of the cell cycle and may be involved in DNA repair. Acetylation at Lys-123 (H3K122ac) plays a central role in chromatin structure: localizes at the surface of the histone octamer and stimulates transcription, possibly by promoting nucleosome instability.

The protein resides in the nucleus. The protein localises to the chromosome. Its function is as follows. Core component of nucleosome. Nucleosomes wrap and compact DNA into chromatin, limiting DNA accessibility to the cellular machineries which require DNA as a template. Histones thereby play a central role in transcription regulation, DNA repair, DNA replication and chromosomal stability. DNA accessibility is regulated via a complex set of post-translational modifications of histones, also called histone code, and nucleosome remodeling. This is Histone H3.3 (hht3) from Schizosaccharomyces pombe (strain 972 / ATCC 24843) (Fission yeast).